We begin with the raw amino-acid sequence, 108 residues long: Movement protein TGB2 (108 aa).

Topologically, residues 1-14 (MPLTPPPDHSITYR) are cytoplasmic. Residues 15-31 (ILAVGLCSCCAIYAATR) traverse the membrane as a helical segment. Residues 32–67 (STLPHTGDNLHSLPYGGKYSDGTKSICYSGPGPTPD) lie on the Lumenal side of the membrane. A helical transmembrane segment spans residues 68–85 (IPTHLPALLVLVLVVAIY). Over 86–108 (ASSRLDFSVNYRCSCRVHNRSGQ) the chain is Cytoplasmic.

Belongs to the Tymovirales TGBp2 protein family.

The protein localises to the host endoplasmic reticulum membrane. Plays a role in viral cell-to-cell propagation, by facilitating genome transport to neighboring plant cells through plasmosdesmata,. This chain is Movement protein TGB2, found in Strawberry mild yellow edge-associated virus (SMYEaV).